A 567-amino-acid polypeptide reads, in one-letter code: Urease subunit alpha (567 aa).

Residues His-134, His-136, and Lys-217 each coordinate Ni(2+). Lys-217 carries the N6-carboxylysine modification. His-219 is a binding site for substrate. Ni(2+) contacts are provided by His-246 and His-272. His-320 functions as the Proton donor in the catalytic mechanism. Asp-360 serves as a coordination point for Ni(2+).

The protein belongs to the metallo-dependent hydrolases superfamily. Urease alpha subunit family. In terms of assembly, heterotrimer of UreA (gamma), UreB (beta) and UreC (alpha) subunits. Three heterotrimers associate to form the active enzyme. It depends on Ni cation as a cofactor. Post-translationally, carboxylation allows a single lysine to coordinate two nickel ions.

It is found in the cytoplasm. The catalysed reaction is urea + 2 H2O + H(+) = hydrogencarbonate + 2 NH4(+). Its pathway is nitrogen metabolism; urea degradation; CO(2) and NH(3) from urea (urease route): step 1/1. The protein is Urease subunit alpha of Polynucleobacter asymbioticus (strain DSM 18221 / CIP 109841 / QLW-P1DMWA-1) (Polynucleobacter necessarius subsp. asymbioticus).